A 571-amino-acid chain; its full sequence is Protein PNS1 (571 aa).

The interval 1–96 (MNDEEKHLAA…PDFPPDYNYK (96 aa)) is disordered. Topologically, residues 1–118 (MNDEEKHLAA…AVPKPKWNDK (118 aa)) are cytoplasmic. Polar residues predominate over residues 15 to 31 (YQPNMHYQQQQEKQTGY). Composition is skewed to low complexity over residues 39-52 (QGGYNQNQNQDYYN) and 71-80 (GNPNDNYNNQ). Positions 81-90 (QPPPYTPDFP) are enriched in pro residues. The chain crosses the membrane as a helical span at residues 119 to 139 (IGLVILALIFSGYLALSIIVI). Topologically, residues 140-166 (RAYAQTHSFQGWGIYSGENDYSLNTHT) are extracellular. The helical transmembrane segment at 167 to 187 (LILYAFVLATAMVLSLLYFIA) threads the bilayer. The Cytoplasmic portion of the chain corresponds to 188–189 (AR). A helical transmembrane segment spans residues 190–210 (VWTKQFIWITYILHLLFSWGT). A211 is a topological domain (extracellular). A helical transmembrane segment spans residues 212 to 232 (IYYLVVGYYSAGIVFIVFAAL). Topologically, residues 233–263 (TTWWFWCSRKRIPFATIVLQTLIDVTRANPS) are cytoplasmic. Residues 264 to 284 (VLVISAVGTVVGACFGTWFSF) form a helical membrane-spanning segment. Over 285-311 (TIVSIYVKYDPDNRNPGCMTTGGSCSN) the chain is Extracellular. Residues 312–332 (GKLIGLILFAIFCGYYLTEVI) form a helical membrane-spanning segment. The Cytoplasmic portion of the chain corresponds to 333–369 (KNVIHVTISGVYGSWYYCSKSDQGMPKHAAMSSFRRA). The chain crosses the membrane as a helical span at residues 370 to 390 (VTYSLGSISLGSLIVSIINFI). The Extracellular segment spans residues 391–406 (RQILSVLQQDARQSGD). Residues 407 to 427 (TLATVLLCFVQCCFGVLDWLV) traverse the membrane as a helical segment. The Cytoplasmic portion of the chain corresponds to 428-472 (TYFNHYAYSYIALYGKAYVPSAKATWKLMQTRGIDAMVNDSLIGS). A helical membrane pass occupies residues 473–493 (VLSFGASFVAYAAALVAYCFL). The Extracellular portion of the chain corresponds to 494–503 (KYTDPSYNSG). A helical membrane pass occupies residues 504–524 (GGFYAPVVGLAFVIALQVSNI). Over 525 to 571 (TNVSLKSGCSTFFLALARDPEVLRVSYPQIYEEICRTYPPARDKLDI) the chain is Cytoplasmic.

This sequence belongs to the CTL (choline transporter-like) family.

The protein localises to the cell membrane. Its function is as follows. Probably involved in transport through the plasma membrane. The protein is Protein PNS1 (PNS1) of Yarrowia lipolytica (strain CLIB 122 / E 150) (Yeast).